Reading from the N-terminus, the 478-residue chain is ATP synthase subunit beta (478 aa).

164–171 (GGAGVGKT) contacts ATP.

This sequence belongs to the ATPase alpha/beta chains family. In terms of assembly, F-type ATPases have 2 components, CF(1) - the catalytic core - and CF(0) - the membrane proton channel. CF(1) has five subunits: alpha(3), beta(3), gamma(1), delta(1), epsilon(1). CF(0) has three main subunits: a(1), b(2) and c(9-12). The alpha and beta chains form an alternating ring which encloses part of the gamma chain. CF(1) is attached to CF(0) by a central stalk formed by the gamma and epsilon chains, while a peripheral stalk is formed by the delta and b chains.

It localises to the cell membrane. The enzyme catalyses ATP + H2O + 4 H(+)(in) = ADP + phosphate + 5 H(+)(out). Its function is as follows. Produces ATP from ADP in the presence of a proton gradient across the membrane. The catalytic sites are hosted primarily by the beta subunits. The protein is ATP synthase subunit beta of Corynebacterium kroppenstedtii (strain DSM 44385 / JCM 11950 / CIP 105744 / CCUG 35717).